The following is a 443-amino-acid chain: MNRSKTFGKIRKRLEEAKNKWARLCKVEYSYNESARLATDALLDGGVEDYEKVLNEEGEVDFLSGDEIQYIMKNIKEPMYSNDNQTEGECGSAANGNKSECFYPMNSDKSEPVSTLHNWSAEEKPYLKDKSSATVYFQTDKTNNVRETIRRCIHRTTQVLAILMDEFTDAEIFCDVLEAANKRNIFVYLLLDANKLHLFTQMCEKLQVRDLHMKNISVRSVTGDVYCAKSGKKFAGQIHEKFIISDWRCVLSGSYSFTWLSGQVHRNFLYKFSGVVVELFDEEFRHLYGSSKPVMGLKSPAPMAPVLRREDSGVSVMTDSTPESVNTTSEPFSSTSTASISNDSQRPKSPESTDPVLASPPRSPVRSPLQRMNSLHGYPSLISPPPQSNYQPNYYQRNYAPDSPSSFFNNNANIYRSFRMRQDDFSTPRFNQGWSLFSRSTMT.

The interval Asp-311–Ser-403 is disordered. The segment covering Ser-315–Asn-326 has biased composition (polar residues). Low complexity-rich tracts occupy residues Thr-327–Ser-344 and Ser-388–Tyr-399.

The protein belongs to the FAM83 family.

It localises to the cytoplasm. Its function is as follows. May function in the epidermal growth factor receptor/EGFR signaling pathway. The polypeptide is Protein FAM83A (Xenopus laevis (African clawed frog)).